The sequence spans 207 residues: Large ribosomal subunit protein uL4 (207 aa).

Positions 54 to 76 are disordered; it reads RSAVRGGGRKPWRQKGTGRARQG. The segment covering 60 to 71 has biased composition (basic residues); it reads GGRKPWRQKGTG.

This sequence belongs to the universal ribosomal protein uL4 family. As to quaternary structure, part of the 50S ribosomal subunit.

Its function is as follows. One of the primary rRNA binding proteins, this protein initially binds near the 5'-end of the 23S rRNA. It is important during the early stages of 50S assembly. It makes multiple contacts with different domains of the 23S rRNA in the assembled 50S subunit and ribosome. Functionally, forms part of the polypeptide exit tunnel. This chain is Large ribosomal subunit protein uL4, found in Staphylococcus haemolyticus (strain JCSC1435).